The sequence spans 121 residues: MSITKDQIIEAVAAMSVMDVVELISAMEEKFGVSAAAAVAVAAGPAEAAEEKTEFDVILKGIGANKVAVIKAVRGATGLGLKEAKDLVESAPAALKEGVSKDDAEALKKSLEEAGAEVEVK.

Belongs to the bacterial ribosomal protein bL12 family. Homodimer. Part of the ribosomal stalk of the 50S ribosomal subunit. Forms a multimeric L10(L12)X complex, where L10 forms an elongated spine to which 2 to 4 L12 dimers bind in a sequential fashion. Binds GTP-bound translation factors.

In terms of biological role, forms part of the ribosomal stalk which helps the ribosome interact with GTP-bound translation factors. Is thus essential for accurate translation. This is Large ribosomal subunit protein bL12 from Enterobacter sp. (strain 638).